The chain runs to 266 residues: HLA class II histocompatibility antigen, DR beta 3 chain (266 aa).

The signal sequence occupies residues M1–A29. Residues G30–V124 form a beta-1 region. At G30 to K227 the chain is on the extracellular side. 2 cysteine pairs are disulfide-bonded: C44–C108 and C146–C202. The N-linked (GlcNAc...) asparagine glycan is linked to N48. Residues H125 to K227 form a beta-2 region. An Ig-like C1-type domain is found at P126–T214. The helical transmembrane segment at M228–I248 threads the bilayer. The Cytoplasmic segment spans residues Y249–S266.

It belongs to the MHC class II family. Heterotrimer that consists of an alpha chain HLA-DRA, a beta chain HLA-DRB1 and a peptide (peptide-MHCII). Newly synthesized alpha and beta chains forms a heterodimer (MHCII) that associates with the CD74/invariant chain (Ii) in the endoplasmic reticulum (ER). Ii is a trimer composed of three subunits and each subunit interacts with one MHCII dimer, blocking the peptide-binding cleft. As a result, MHCII molecules cannot bind peptides present in the ER. The complex of MHCII and CD74/Ii is transported in vesicles from ER to Golgi to lysosomes, where it encounters antigenic peptides generated via proteolysis of endocytosed antigens. MHCII dimers are dissociated from CD74/Ii by the combined action of proteolysis and HLA-DM. Lysosomal enzymes such as cathepsin, degrade CD74/Ii leaving a 24 amino acid remnant called class II-associated Ii or CLIP. Interacts (via the peptide binding cleft) with CLIP; this interaction inhibits antigen peptide binding before entry in the endosomal compartment. The displacement of CLIP and replacement by a high affinity peptide in lysosomes is performed by HLA-DM heterodimer. HLA-DM catalyzes CLIP dissociation from MHCII, stabilizes empty MHCII and mediates the selection of high affinity peptides. Interacts with HLA-DM heterodimer; this interaction is direct. Interacts with TCR (via CDR3). Interacts (via beta-2 domain) with CD4 coreceptor (via Ig-like V-type domain); this interaction is of exceptionally low affinity yet necessary for optimal recognition of antigenic peptides. In terms of processing, ubiquitinated by MARCHF1 and MARCHF8 at Lys-254 leading to sorting into the endosome system and down-regulation of MHC class II. In terms of tissue distribution, expressed in professional APCs: monocyte/macrophages, dendritic cells and B cells (at protein level).

Its subcellular location is the cell membrane. It localises to the endoplasmic reticulum membrane. It is found in the lysosome membrane. The protein resides in the late endosome membrane. The protein localises to the autolysosome membrane. Functionally, a beta chain of antigen-presenting major histocompatibility complex class II (MHCII) molecule. In complex with the alpha chain HLA-DRA, displays antigenic peptides on professional antigen presenting cells (APCs) for recognition by alpha-beta T cell receptor (TCR) on HLA-DRB3-restricted CD4-positive T cells. This guides antigen-specific T-helper effector functions, both antibody-mediated immune response and macrophage activation, to ultimately eliminate the infectious agents and transformed cells. Typically presents extracellular peptide antigens of 10 to 30 amino acids that arise from proteolysis of endocytosed antigens in lysosomes. In the tumor microenvironment, presents antigenic peptides that are primarily generated in tumor-resident APCs likely via phagocytosis of apoptotic tumor cells or macropinocytosis of secreted tumor proteins. Presents peptides derived from intracellular proteins that are trapped in autolysosomes after macroautophagy, a mechanism especially relevant for T cell selection in the thymus and central immune tolerance. The selection of the immunodominant epitopes follows two processing modes: 'bind first, cut/trim later' for pathogen-derived antigenic peptides and 'cut first, bind later' for autoantigens/self-peptides. The anchor residue at position 1 of the peptide N-terminus, usually a large hydrophobic residue, is essential for high affinity interaction with MHCII molecules. In terms of biological role, ALLELE DRB3*01:01: Exclusively presents several immunogenic epitopes derived from C.tetani neurotoxin tetX, playing a significant role in immune recognition and long-term protection. Presents viral epitopes derived from HHV-6B U11, TRX2/U56 and U85 antigens to polyfunctional CD4-positive T cells with cytotoxic activity implicated in control of HHV-6B infection. Its function is as follows. ALLELE DRB3*02:02 Exclusively presents several immunogenic epitopes derived from C.tetani neurotoxin tetX, playing a significant role in immune recognition and long-term protection. Upon EBV infection, presents to CD4-positive T cells latent antigen EBNA2 (PRSPTVFYNIPPMPLPPSQL) and lytic antigen BZLF1 (LTAYHVSTAPTGSWF) peptides, driving oligoclonal expansion and selection of virus-specific memory T cell subsets with cytotoxic potential to directly eliminate virus-infected B cells. Presents viral epitopes derived from HHV-6B U11, gB/U39 and gH/U48 antigens to polyfunctional CD4-positive T cells with cytotoxic activity implicated in control of HHV-6B infection. Plays a minor role in CD4-positive T cell immune response against Dengue virus by presenting conserved peptides from capsid and non-structural NS3 proteins. Displays peptides derived from IAV matrix protein M, implying a role in protection against IAV infection. In the context of tumor immunesurveillance, may present to T-helper 1 cells an immunogenic epitope derived from tumor-associated antigen WT1 (KRYFKLSHLQMHSRKH), likely providing for effective antitumor immunity in a wide range of solid and hematological malignancies. Presents to Vbeta2-positive T-helper 1 cells specifically an immunodominant peptide derived from tumor antigen CTAG1A/NY-ESO-1(PGVLLKEFTVSGNILTIRLTAADHR) and confers protective memory response. In metastatic epithelial tumors, presents to intratumoral CD4-positive T cells a TP53 neoantigen (HYNYMCNSSCMGSMNRRPILTIITL) carrying G245S hotspot driver mutation and may mediate tumor regression. ALLELE DRB3*03:01: Presents a series of conserved peptides derived from the M.tuberculosis PPE family of proteins, in particular PPE29 and PPE33, known to be highly immunogenic. Presents immunogenic epitopes derived from C.tetani neurotoxin tetX, playing a role in immune recognition and long-term protection. Displays immunodominant viral peptides from HCV non-structural protein NS2, as part of a broad range T-helper response to resolve infection. This chain is HLA class II histocompatibility antigen, DR beta 3 chain (HLA-DRB3), found in Homo sapiens (Human).